Reading from the N-terminus, the 419-residue chain is Inner ear-specific collagen (419 aa).

The signal sequence occupies residues 1 to 19; sequence MDAYSLSPTDSTTYSSDTF. Residues 20–57 are nonhelical region (NC2); the sequence is STEFHTDAIAPPGNTPGNYTLDYNECFFNFCECCPPEK. The N-linked (GlcNAc...) asparagine glycan is linked to asparagine 37. Residues 58–274 form a triple-helical region (COL1) region; sequence GPMGPMGERG…RGPKGPPGES (217 aa). Residues 63–275 are disordered; that stretch reads MGERGLPGPP…GPKGPPGESV (213 aa). 2 stretches are compositionally biased toward basic and acidic residues: residues 129–144 and 184–202; these read PGEK…KGER and LKGE…KGER. The span at 227–236 shows a compositional bias: gly residues; that stretch reads GPLGGKGDTG. The region spanning 275–412 is the C1q domain; sequence VEQIRSAFSV…GFLLYPDTKK (138 aa). The tract at residues 275–419 is nonhelical region (NC1); the sequence is VEQIRSAFSV…TKKPTAMENL (145 aa). Asparagine 320 carries an N-linked (GlcNAc...) asparagine glycan.

In terms of tissue distribution, specialized secretory supporting cells at the outer perimeter of the saccular epithelium.

The protein localises to the secreted. It localises to the extracellular space. It is found in the extracellular matrix. Its function is as follows. Forms a microstructural matrix within the otolithic membrane. The polypeptide is Inner ear-specific collagen (Lepomis macrochirus (Bluegill)).